A 118-amino-acid polypeptide reads, in one-letter code: Immunoglobulin heavy variable 4-31 (118 aa).

Positions 1–19 (MKHLWFFLLLVAAPRWVLS) are cleaved as a signal peptide. Positions 20–44 (QVQLQESGPGLVKPSQTLSLTCTVS) are framework-1. Positions 20–118 (QVQLQESGPG…ADTAVYYCAR (99 aa)) constitute an Ig-like domain. Cysteine 41 and cysteine 116 are oxidised to a cystine. The segment at 45 to 54 (GGSISSGGYY) is complementarity-determining-1. The tract at residues 55 to 71 (WSWIRQHPGKGLEWIGY) is framework-2. The interval 72-78 (IYYSGST) is complementarity-determining-2. The interval 79-116 (YYNPSLKSLVTISVDTSKNQFSLKLSSVTAADTAVYYC) is framework-3. A complementarity-determining-3 region spans residues 117–118 (AR).

In terms of assembly, immunoglobulins are composed of two identical heavy chains and two identical light chains; disulfide-linked.

The protein resides in the secreted. It is found in the cell membrane. In terms of biological role, v region of the variable domain of immunoglobulin heavy chains that participates in the antigen recognition. Immunoglobulins, also known as antibodies, are membrane-bound or secreted glycoproteins produced by B lymphocytes. In the recognition phase of humoral immunity, the membrane-bound immunoglobulins serve as receptors which, upon binding of a specific antigen, trigger the clonal expansion and differentiation of B lymphocytes into immunoglobulins-secreting plasma cells. Secreted immunoglobulins mediate the effector phase of humoral immunity, which results in the elimination of bound antigens. The antigen binding site is formed by the variable domain of one heavy chain, together with that of its associated light chain. Thus, each immunoglobulin has two antigen binding sites with remarkable affinity for a particular antigen. The variable domains are assembled by a process called V-(D)-J rearrangement and can then be subjected to somatic hypermutations which, after exposure to antigen and selection, allow affinity maturation for a particular antigen. The protein is Immunoglobulin heavy variable 4-31 of Homo sapiens (Human).